The primary structure comprises 330 residues: GTP 3',8-cyclase (330 aa).

In terms of domain architecture, Radical SAM core spans 9 to 225 (RFGRTVNYVR…IRRHHELIPA (217 aa)). Arginine 18 is a binding site for GTP. Cysteine 25 and cysteine 29 together coordinate [4Fe-4S] cluster. S-adenosyl-L-methionine is bound at residue tyrosine 31. Cysteine 32 contacts [4Fe-4S] cluster. Arginine 67 is a binding site for GTP. Residue glycine 71 participates in S-adenosyl-L-methionine binding. Threonine 97 is a GTP binding site. S-adenosyl-L-methionine is bound at residue serine 121. Lysine 158 contributes to the GTP binding site. Methionine 192 is an S-adenosyl-L-methionine binding site. [4Fe-4S] cluster contacts are provided by cysteine 256 and cysteine 259. 261-263 (RVR) provides a ligand contact to GTP. A [4Fe-4S] cluster-binding site is contributed by cysteine 273.

This sequence belongs to the radical SAM superfamily. MoaA family. As to quaternary structure, monomer and homodimer. The cofactor is [4Fe-4S] cluster.

It catalyses the reaction GTP + AH2 + S-adenosyl-L-methionine = (8S)-3',8-cyclo-7,8-dihydroguanosine 5'-triphosphate + 5'-deoxyadenosine + L-methionine + A + H(+). It functions in the pathway cofactor biosynthesis; molybdopterin biosynthesis. Functionally, catalyzes the cyclization of GTP to (8S)-3',8-cyclo-7,8-dihydroguanosine 5'-triphosphate. The chain is GTP 3',8-cyclase from Marinobacter nauticus (strain ATCC 700491 / DSM 11845 / VT8) (Marinobacter aquaeolei).